The sequence spans 226 residues: Urease accessory protein UreF (226 aa).

The protein belongs to the UreF family. In terms of assembly, ureD, UreF and UreG form a complex that acts as a GTP-hydrolysis-dependent molecular chaperone, activating the urease apoprotein by helping to assemble the nickel containing metallocenter of UreC. The UreE protein probably delivers the nickel.

Its subcellular location is the cytoplasm. Required for maturation of urease via the functional incorporation of the urease nickel metallocenter. The polypeptide is Urease accessory protein UreF (Corynebacterium glutamicum (strain R)).